We begin with the raw amino-acid sequence, 204 residues long: Large ribosomal subunit protein uL4 (204 aa).

The segment at 49 to 76 (KTKGISDVSGTTAKPYGQKRTGRARQGS) is disordered.

The protein belongs to the universal ribosomal protein uL4 family. Part of the 50S ribosomal subunit.

In terms of biological role, one of the primary rRNA binding proteins, this protein initially binds near the 5'-end of the 23S rRNA. It is important during the early stages of 50S assembly. It makes multiple contacts with different domains of the 23S rRNA in the assembled 50S subunit and ribosome. Forms part of the polypeptide exit tunnel. In Wolbachia pipientis wMel, this protein is Large ribosomal subunit protein uL4.